The chain runs to 279 residues: Beta-lactamase (279 aa).

Positions 1–21 (MRYVRLCVISLLATLPLVVYA) are cleaved as a signal peptide. Ser-66 functions as the Acyl-ester intermediate in the catalytic mechanism. An intrachain disulfide couples Cys-73 to Cys-119. Substrate is bound at residue 230-232 (KTG).

Belongs to the class-A beta-lactamase family.

The enzyme catalyses a beta-lactam + H2O = a substituted beta-amino acid. The protein is Beta-lactamase of Klebsiella pneumoniae.